Reading from the N-terminus, the 649-residue chain is Probable potassium transport system protein Kup (649 aa).

Helical transmembrane passes span 1–21, 42–62, 84–104, 126–146, 159–179, 195–215, 235–255, 286–306, 334–354, 364–384, 390–410, and 414–434; these read MAIV…LYTM, ILSL…VFIA, GAWL…DSVL, IMSG…VCLF, TFGT…LVNL, VEFL…TVFL, IYFT…GQGA, VAVL…ITGA, LYIP…LAMF, YGLA…VYIW, VGAV…FFAS, and FLHG…IMYT.

It belongs to the HAK/KUP transporter (TC 2.A.72) family.

It is found in the cell membrane. It carries out the reaction K(+)(in) + H(+)(in) = K(+)(out) + H(+)(out). Its function is as follows. Transport of potassium into the cell. Likely operates as a K(+):H(+) symporter. The protein is Probable potassium transport system protein Kup of Bifidobacterium adolescentis (strain ATCC 15703 / DSM 20083 / NCTC 11814 / E194a).